The following is a 2275-amino-acid chain: Serine-rich adhesin for platelets (2275 aa).

Positions 1-89 (MSKRQKEFHD…VNMLHDQQAF (89 aa)) are cleaved as a signal peptide. The interval 90–264 (AASDAPLTSE…TANTITVNKD (175 aa)) is serine-rich repeat region 1, SRR1. Residues 100–111 (LNTQSETVGNQN) show a composition bias toward polar residues. Disordered regions lie at residues 100 to 229 (LNTQ…STST) and 751 to 2247 (NSMS…GLLG). A compositionally biased stretch (low complexity) spans 112–128 (STTIEASTSTADSTSVT). The span at 129–140 (KNSSSVQTSNSD) shows a compositional bias: polar residues. Positions 150–229 (VTSTTNSTSN…NKTSTTSTST (80 aa)) are enriched in low complexity. Residues 265-751 (NLKQYMTTSG…TTFKYEVTRN (487 aa)) are non-repeat region (NRR). Low complexity-rich tracts occupy residues 752 to 1392 (SMSD…LSLS) and 1402 to 2218 (SNSA…ATSE). The interval 752-2236 (SMSDSVSTSG…AQSEKRLPDT (1485 aa)) is serine-rich repeat region 2, SRR2. The LPXTG sorting signal motif lies at 2233 to 2237 (LPDTG). Position 2236 is a pentaglycyl murein peptidoglycan amidated threonine (Thr-2236). Residues 2237–2275 (GDSIKQNGLLGGVMTLLVGLGLMKRKKKKDENDQDDSQA) constitute a propeptide, removed by sortase.

Belongs to the serine-rich repeat protein (SRRP) family. In terms of assembly, interacts with human gp-340 (DMBT1). Proteolytically cleaved by a metalloprotease. In terms of processing, glycosylated. It is probable that most of the Ser residues in SSR1 and SSR2 are O-GlcNAcylated. Sequential glycosylation by sugar transferases are able to generate complex sugar polymorphisms.

It localises to the secreted. The protein resides in the cell wall. In terms of biological role, mediates binding to human platelets, possibly through a receptor-ligand interaction. Probably associated with virulence in endovascular infection. Interacts with host (human) gp-340 via the non-repeat region (NRR or binding region). Binding is inhibited by N-acetylneuraminic acid (NeuAc). This chain is Serine-rich adhesin for platelets (sraP), found in Staphylococcus aureus (strain MW2).